The sequence spans 247 residues: Coproheme decarboxylase (247 aa).

Residues arginine 129, 143–147, histidine 170, glutamine 183, and serine 221 contribute to the Fe-coproporphyrin III site; that span reads YPMDK. Tyrosine 143 is a catalytic residue.

It belongs to the ChdC family. Type 1 subfamily. Fe-coproporphyrin III is required as a cofactor.

It catalyses the reaction Fe-coproporphyrin III + 2 H2O2 + 2 H(+) = heme b + 2 CO2 + 4 H2O. The enzyme catalyses Fe-coproporphyrin III + H2O2 + H(+) = harderoheme III + CO2 + 2 H2O. It carries out the reaction harderoheme III + H2O2 + H(+) = heme b + CO2 + 2 H2O. The protein operates within porphyrin-containing compound metabolism; protoheme biosynthesis. Involved in coproporphyrin-dependent heme b biosynthesis. Catalyzes the decarboxylation of Fe-coproporphyrin III (coproheme) to heme b (protoheme IX), the last step of the pathway. The reaction occurs in a stepwise manner with a three-propionate intermediate. The protein is Coproheme decarboxylase of Bacillus cytotoxicus (strain DSM 22905 / CIP 110041 / 391-98 / NVH 391-98).